Here is an 888-residue protein sequence, read N- to C-terminus: Patched domain-containing protein 1 (888 aa).

Residues 20–40 (FIASHPVFFASAPVLISILLG) form a helical membrane-spanning segment. N-linked (GlcNAc...) asparagine glycans are attached at residues N77, N133, and N167. Positions 268–427 (SERYLVTSLI…LSFYGSSLVF (160 aa)) constitute an SSD domain. Transmembrane regions (helical) follow at residues 273-293 (VTSLILVVTMAILCCSMQDCV) and 298-318 (WLGLLGLVTISLATLTAAGII). 2 N-linked (GlcNAc...) asparagine glycosylation sites follow: N319 and N326. 4 consecutive transmembrane segments (helical) span residues 328–348 (TFLGVPFVMLGHGLYGTFEML), 373–393 (LSFSLTTAMYLVTFGIGASPF), 407–427 (CIAILFNYLYVLSFYGSSLVF), and 502–522 (PFVVLFYLIYISFALMGYLQV). N-linked (GlcNAc...) asparagine glycans are attached at residues N568, N599, and N608. 2 consecutive transmembrane segments (helical) span residues 707 to 727 (ALFLLFFSAFLVADSLINVWI) and 738 to 758 (VIGFMTLWKVELDCISVLCLI). N-linked (GlcNAc...) asparagine glycosylation occurs at N762. Residues 795–815 (GVAILQSYLCYIVGLFPLAAV) form a helical membrane-spanning segment. N-linked (GlcNAc...) asparagine glycosylation is present at N818. A helical transmembrane segment spans residues 826–846 (CLFLIAFVTFFHCFAILPVIL).

Belongs to the patched family. As to expression, broadly expressed in the brain. Selectively expressed in the thalamic reticular nucleus (TRN) in early development and continues to be enriched in this structure throughout adult life.

It localises to the cell membrane. It is found in the cell projection. The protein resides in the dendritic spine. Its function is as follows. Required for the development and function of the thalamic reticular nucleus (TRN), a part of the thalamus that is critical for thalamocortical transmission, generation of sleep rhythms, sensorimotor processing and attention. Can bind cholesterol in vitro. The chain is Patched domain-containing protein 1 from Mus musculus (Mouse).